Consider the following 493-residue polypeptide: Xaa-Pro dipeptidase (493 aa).

Ala-2 carries the N-acetylalanine modification. Ser-167 carries the phosphoserine modification. His-255 serves as a coordination point for a dipeptide. Residues Asp-276, Asp-287, and His-370 each contribute to the Mn(2+) site. Residue Asp-287 coordinates a dipeptide. Positions 377 and 398 each coordinate a dipeptide. 2 residues coordinate Mn(2+): Glu-412 and Glu-452.

This sequence belongs to the peptidase M24B family. Eukaryotic-type prolidase subfamily. Homodimer. Mn(2+) serves as cofactor.

The catalysed reaction is Xaa-L-Pro dipeptide + H2O = an L-alpha-amino acid + L-proline. Its activity is regulated as follows. Specifically inhibited by the pseudodipeptide CQ31. Inhibition by CQ31 indirectly activates the CARD8 inflammasome: dipeptide accumulation following PEPD inactivation weaky inhibit dipeptidyl peptidases DDP8 and DPP9, relieving DPP8- and/or DPP9-mediated inhibition of CARD8. Dipeptidase that catalyzes the hydrolysis of dipeptides with a prolyl (Xaa-Pro) or hydroxyprolyl residue in the C-terminal position. The preferred dipeptide substrate is Gly-Pro, but other Xaa-Pro dipeptides, such as Ala-Pro, Met-Pro, Phe-Pro, Val-Pro and Leu-Pro, can be cleaved. Plays an important role in collagen metabolism because the high level of iminoacids in collagen. In Homo sapiens (Human), this protein is Xaa-Pro dipeptidase.